A 255-amino-acid chain; its full sequence is 4-diphosphocytidyl-2-C-methyl-D-erythritol kinase (255 aa).

K9 is an active-site residue. Residue 95 to 105 coordinates ATP; sequence PSQAGLGGGSS. D137 is a catalytic residue.

Belongs to the GHMP kinase family. IspE subfamily.

The enzyme catalyses 4-CDP-2-C-methyl-D-erythritol + ATP = 4-CDP-2-C-methyl-D-erythritol 2-phosphate + ADP + H(+). It participates in isoprenoid biosynthesis; isopentenyl diphosphate biosynthesis via DXP pathway; isopentenyl diphosphate from 1-deoxy-D-xylulose 5-phosphate: step 3/6. In terms of biological role, catalyzes the phosphorylation of the position 2 hydroxy group of 4-diphosphocytidyl-2C-methyl-D-erythritol. This is 4-diphosphocytidyl-2-C-methyl-D-erythritol kinase from Sulfurovum sp. (strain NBC37-1).